Reading from the N-terminus, the 321-residue chain is GDP-L-fucose synthase (321 aa).

Residues 10–16 (GHRGMVG), 36–41 (RDELNL), and 105–108 (LGSS) each bind NADP(+). The active-site Proton donor/acceptor is the tyrosine 136. NADP(+) contacts are provided by residues lysine 140, 163–166 (PTNL), and histidine 179. Arginine 187, tryptophan 202, arginine 209, and aspartate 278 together coordinate substrate.

This sequence belongs to the NAD(P)-dependent epimerase/dehydratase family. Fucose synthase subfamily. As to quaternary structure, homodimer.

The protein resides in the cytoplasm. It catalyses the reaction GDP-beta-L-fucose + NADP(+) = GDP-4-dehydro-alpha-D-rhamnose + NADPH + H(+). It participates in nucleotide-sugar biosynthesis; GDP-L-fucose biosynthesis via de novo pathway; GDP-L-fucose from GDP-alpha-D-mannose: step 2/2. Its pathway is exopolysaccharide biosynthesis; colanic acid biosynthesis. Subject to product inhibition by NADP and GDP-fucose. In terms of biological role, catalyzes the two-step NADP-dependent conversion of GDP-4-dehydro-6-deoxy-D-mannose to GDP-fucose, involving an epimerase and a reductase reaction. The polypeptide is GDP-L-fucose synthase (Escherichia coli (strain K12)).